The primary structure comprises 479 residues: Ribosomal RNA small subunit methyltransferase F (479 aa).

Residues 125-131 (AAAPGSK), glutamate 149, aspartate 176, and aspartate 194 each bind S-adenosyl-L-methionine. Cysteine 247 (nucleophile) is an active-site residue.

The protein belongs to the class I-like SAM-binding methyltransferase superfamily. RsmB/NOP family.

It is found in the cytoplasm. The enzyme catalyses cytidine(1407) in 16S rRNA + S-adenosyl-L-methionine = 5-methylcytidine(1407) in 16S rRNA + S-adenosyl-L-homocysteine + H(+). Functionally, specifically methylates the cytosine at position 1407 (m5C1407) of 16S rRNA. This Escherichia coli O17:K52:H18 (strain UMN026 / ExPEC) protein is Ribosomal RNA small subunit methyltransferase F.